We begin with the raw amino-acid sequence, 155 residues long: Small ribosomal subunit protein uS7 (155 aa).

Belongs to the universal ribosomal protein uS7 family. Part of the 30S ribosomal subunit. Contacts proteins S9 and S11.

Functionally, one of the primary rRNA binding proteins, it binds directly to 16S rRNA where it nucleates assembly of the head domain of the 30S subunit. Is located at the subunit interface close to the decoding center, probably blocks exit of the E-site tRNA. The chain is Small ribosomal subunit protein uS7 from Lactococcus lactis subsp. lactis (strain IL1403) (Streptococcus lactis).